The sequence spans 404 residues: Cysteine desulfurase IscS (404 aa).

Pyridoxal 5'-phosphate is bound by residues 75–76, N155, Q183, and 203–205; these read AT and SAH. K206 carries the post-translational modification N6-(pyridoxal phosphate)lysine. Residue T243 participates in pyridoxal 5'-phosphate binding. C328 serves as the catalytic Cysteine persulfide intermediate. C328 is a binding site for [2Fe-2S] cluster.

Belongs to the class-V pyridoxal-phosphate-dependent aminotransferase family. NifS/IscS subfamily. In terms of assembly, homodimer. Forms a heterotetramer with IscU, interacts with other sulfur acceptors. Requires pyridoxal 5'-phosphate as cofactor.

The protein localises to the cytoplasm. It catalyses the reaction (sulfur carrier)-H + L-cysteine = (sulfur carrier)-SH + L-alanine. It participates in cofactor biosynthesis; iron-sulfur cluster biosynthesis. Functionally, master enzyme that delivers sulfur to a number of partners involved in Fe-S cluster assembly, tRNA modification or cofactor biosynthesis. Catalyzes the removal of elemental sulfur atoms from cysteine to produce alanine. Functions as a sulfur delivery protein for Fe-S cluster synthesis onto IscU, an Fe-S scaffold assembly protein, as well as other S acceptor proteins. This Vibrio vulnificus (strain YJ016) protein is Cysteine desulfurase IscS.